A 693-amino-acid polypeptide reads, in one-letter code: MAHTFLLEIGLEEIPAHVVTPSVNQLVQKTTKFLKEQRIDFDEVIPYSTPRRLTVKVTGLADKQADIEEEAKGPSKKIALDDEGNWSKAAQGFVRGQGVTVDDIFFKELKGTEYVYVKKFIPGKPVSEVLTGMKDVAMDLKFPTMMRWGSNDFEYVRPIKWLVALLDDEVVPFEILDIKTGRTTQGHRFLGEAVDVPSADKYLETLETQKVIADAGVRKAEIRKQIDDLATENNWNIVVDEDLLEEVNNLVEYPTVFAGKFKEEYLQVPNEVLITSMKDHQRFFYVTDKDGNLLPNFVSVRNGNKDYLENVVAGNEKVLTARLEDAKFFYEEDQQHTIADYVERLKKVMFHDKIGTIYEKMERVNLLAKFLGNKLGLSETELKDLDRASMIYKFDLVTGMVGEFSELQGIMGEIYARLQGEDDNVSTAIREEYMPTSSEGELPQSNVGAVLSIADKLDSIQSFFAANMIPSGSNDPYALRRQALGIIRIALDKGWDISLPLLHEAINYAYAEREDLYKNTQPITNVSETDSFVIDRLAQVLSGNKFRRDILDAVVARADMPFIQALQAAQVLSKHAEDDNFKEVIEALTRVTRLAKKAPEFGSDAVIDSTLFENDTEKVLADEFAKVEAGYGDAEMNEKFTILSSLKDSITAYFDATMIMADDEKVKNNRLLQLVKIAELTEDFGSLDKLIVK.

Belongs to the class-II aminoacyl-tRNA synthetase family. In terms of assembly, tetramer of two alpha and two beta subunits.

The protein resides in the cytoplasm. It catalyses the reaction tRNA(Gly) + glycine + ATP = glycyl-tRNA(Gly) + AMP + diphosphate. This Ligilactobacillus salivarius (strain UCC118) (Lactobacillus salivarius) protein is Glycine--tRNA ligase beta subunit.